The primary structure comprises 539 residues: MAAKDVKFSTDARDRMLRGVDILANAVKVTLGPKGRNVVIEKSFGAPRITKDGVTVAKEIELEDKFENMGAQMVREVASKTADLAGDGTTTATVLAQAIVKEGAKSVAAGMNPMDLKRGIDLAVEAIVKDLKAHAKKITSNDEIAQVGTISANGDSEIGRFLAEAMQKVGNEGVITVEEAKSLDTELEVVEGMQFDRGYVSPYFVTNSEKMRVELEDPYILIHEKKLSGLQTMLPLLEAVVQSGKPLLIVAEDVEGEALATLVVNKLRGGLKIAAVKAPGFGDRRKAMLEDIAILTGGTTISEDLGIKLENVTLSMLGRAKKVVIDKENTTIVDGAGAKKDIEARTQQIRLQIEETTSDYDREKLQERLAKLAGGVAVIRVGGATEVEVKERKDRVDDALHATRAAVEEGILPGGGVALLRATKVLDGVKTANADQKAGVDIIRRAIQVPVRQIVQNAGDDGSLVVGKLLEKDSYSWGFNAATGEYQDLVQAGVIDPAKVVRTALQDAASVASLLITTEALVADKPKKAETAAAPAMDY.

ATP is bound by residues threonine 30–proline 33, lysine 51, aspartate 87–threonine 91, glycine 415, asparagine 480–alanine 482, and aspartate 496.

The protein belongs to the chaperonin (HSP60) family. Forms a cylinder of 14 subunits composed of two heptameric rings stacked back-to-back. Interacts with the co-chaperonin GroES.

It localises to the cytoplasm. The enzyme catalyses ATP + H2O + a folded polypeptide = ADP + phosphate + an unfolded polypeptide.. Together with its co-chaperonin GroES, plays an essential role in assisting protein folding. The GroEL-GroES system forms a nano-cage that allows encapsulation of the non-native substrate proteins and provides a physical environment optimized to promote and accelerate protein folding. The sequence is that of Chaperonin GroEL 1 from Bradyrhizobium sp. (strain ORS 278).